The chain runs to 343 residues: Melanoma-associated antigen B18 (343 aa).

Basic residues predominate over residues 1-17 (MPRGQKSKLRAREKRHQ). Residues 1 to 102 (MPRGQKSKLR…LGSSREAEGW (102 aa)) are disordered. Over residues 67–87 (APSTTNAIAPVSCSSNEGASS) the composition is skewed to polar residues. Residues 88-102 (QDEKSLGSSREAEGW) show a composition bias toward basic and acidic residues. An interaction with LNX1 region spans residues 100–343 (EGWKEDPLNK…TTSSSFSHAK (244 aa)). The MAGE domain occupies 107–306 (LNKKVVSLVH…SAFPSCYEEA (200 aa)). The interval 313–343 (RTQARAAARAHTAAMANARSRTTSSSFSHAK) is disordered. Residues 316-333 (ARAAARAHTAAMANARSR) show a composition bias toward low complexity. A compositionally biased stretch (polar residues) spans 334 to 343 (TTSSSFSHAK).

In terms of assembly, interacts with LNX1.

The protein localises to the cytoplasm. Functionally, may enhance ubiquitin ligase activity of RING-type zinc finger-containing E3 ubiquitin-protein ligases. Proposed to act through recruitment and/or stabilization of the Ubl-conjugating enzyme (E2) at the E3:substrate complex. The sequence is that of Melanoma-associated antigen B18 (MAGEB18) from Homo sapiens (Human).